Here is a 364-residue protein sequence, read N- to C-terminus: Protein FAM81A (364 aa).

Coiled coils occupy residues phenylalanine 75–isoleucine 107, asparagine 158–serine 189, and alanine 261–asparagine 287. The disordered stretch occupies residues glutamate 281 to histidine 300.

It belongs to the FAM81 family. In terms of assembly, interacts with DLG4/PSD-95, GRIN2B/GLUN2B and SYNGAP1; the interactions facilitate condensate formation. Expressed in most regions of the brain (at protein level).

It localises to the postsynaptic density. It is found in the cytoplasm. In terms of biological role, facilitates the interaction and assembly of proteins within the postsynaptic density by promoting the condensation of postsynaptic proteins via liquid-liquid phase separation. Required for neuronal activity. Accumulation at the postsynaptic density results in enlargement of dendritic spines. The chain is Protein FAM81A (Fam81a) from Mus musculus (Mouse).